The chain runs to 135 residues: ATP synthase epsilon chain (135 aa).

It belongs to the ATPase epsilon chain family. In terms of assembly, F-type ATPases have 2 components, CF(1) - the catalytic core - and CF(0) - the membrane proton channel. CF(1) has five subunits: alpha(3), beta(3), gamma(1), delta(1), epsilon(1). CF(0) has three main subunits: a, b and c.

It is found in the cell inner membrane. Its function is as follows. Produces ATP from ADP in the presence of a proton gradient across the membrane. This Bradyrhizobium sp. (strain ORS 278) protein is ATP synthase epsilon chain.